The primary structure comprises 118 residues: Large ribosomal subunit protein bL21c (118 aa).

Belongs to the bacterial ribosomal protein bL21 family. Part of the 50S ribosomal subunit.

It is found in the plastid. The protein resides in the chloroplast. Its function is as follows. This protein binds to 23S rRNA. The protein is Large ribosomal subunit protein bL21c of Zygnema circumcarinatum (Green alga).